The following is a 128-amino-acid chain: Transcription antitermination protein NusB (128 aa).

The protein belongs to the NusB family.

Functionally, involved in transcription antitermination. Required for transcription of ribosomal RNA (rRNA) genes. Binds specifically to the boxA antiterminator sequence of the ribosomal RNA (rrn) operons. This Staphylococcus haemolyticus (strain JCSC1435) protein is Transcription antitermination protein NusB.